The following is a 144-amino-acid chain: Gas vesicle protein A1 (144 aa).

Positions 72–144 (EAGPRKDPGL…APSRRKEEQE (73 aa)) are disordered. The segment covering 113 to 127 (KQARDDGGSERETSS) has biased composition (basic and acidic residues).

The protein belongs to the gas vesicle GvpA family. As to quaternary structure, the gas vesicle shell is 2 nm thick and consists of a single layer of this protein. It forms helical ribs nearly perpendicular to the long axis of the vesicle.

The protein localises to the gas vesicle shell. Gas vesicles are hollow, gas filled proteinaceous nanostructures found in some microorganisms. During planktonic growth they allow positioning of the organism at a favorable depth for light or nutrient acquisition. GvpA forms the protein shell. It is not clear what function GVs perform in soil bacteria. This chain is Gas vesicle protein A1, found in Streptomyces coelicolor (strain ATCC BAA-471 / A3(2) / M145).